The primary structure comprises 477 residues: D-alanyl-D-alanine carboxypeptidase DacB (477 aa).

The N-terminal stretch at 1–20 is a signal peptide; that stretch reads MRFSRFIIGLTSCIAFSVQA. Serine 62 functions as the Acyl-ester intermediate in the catalytic mechanism. Catalysis depends on lysine 65, which acts as the Proton acceptor. The segment at 90–263 is absent in class-A beta-lactamases; sequence GNVENGVLKG…YAGAILKDEL (174 aa). Serine 306 is an active-site residue. Lysine 417 serves as a coordination point for substrate.

The protein belongs to the peptidase S13 family.

The protein localises to the periplasm. It carries out the reaction Preferential cleavage: (Ac)2-L-Lys-D-Ala-|-D-Ala. Also transpeptidation of peptidyl-alanyl moieties that are N-acyl substituents of D-alanine.. It functions in the pathway cell wall biogenesis; peptidoglycan biosynthesis. Not involved in transpeptidation but exclusively catalyzes a DD-carboxypeptidase and DD-endopeptidase reaction. This Escherichia coli (strain K12) protein is D-alanyl-D-alanine carboxypeptidase DacB (dacB).